The sequence spans 530 residues: Retinoic acid-induced protein 2 (530 aa).

Residues 1 to 13 are compositionally biased toward polar residues; the sequence is MDDLQSQNLSMDM. Residues 1–22 form a disordered region; the sequence is MDDLQSQNLSMDMTDSPPALAN.

The chain is Retinoic acid-induced protein 2 (RAI2) from Homo sapiens (Human).